The following is a 477-amino-acid chain: S-triazine hydrolase (477 aa).

2 stretches are compositionally biased toward low complexity: residues Ser38 to Ser73 and Pro120 to Thr132. Disordered stretches follow at residues Ser38–His77 and Pro120–Phe143.

It belongs to the metallo-dependent hydrolases superfamily. ATZ/TRZ family.

The protein operates within xenobiotic degradation; melamine degradation. Functionally, hydrolytic deamination of the S-triazine substrate melamine. This chain is S-triazine hydrolase (trzA), found in Gordonia rubripertincta (Rhodococcus corallinus).